Consider the following 272-residue polypeptide: Short-chain dehydrogenase reductase ATA1 (272 aa).

14–38 (IITGGARGIGAATARLFTENGAYVI) serves as a coordination point for NADP(+). Substrate is bound at residue serine 143. Tyrosine 156 acts as the Proton acceptor in catalysis. Position 160 (lysine 160) interacts with NADP(+).

It belongs to the short-chain dehydrogenases/reductases (SDR) family. Expressed specifically in tapetal cells.

Its function is as follows. May play a role in tapetum development. This chain is Short-chain dehydrogenase reductase ATA1, found in Arabidopsis thaliana (Mouse-ear cress).